A 488-amino-acid polypeptide reads, in one-letter code: MPQLRDSGNHSTAPLDAHTKDEIQSFARIFGIETEYGVSVTGSDRPCDAGQTAMMMFQPIVAEARSTNTYIENGSRLYLDVGSHPEYATAEARDPMDALALDAAGELVMRDLALDAQRRLRSIQGAGSTVHVFKNNVDSAGHSFGCHENYLVRRFVPLKTIEQELLPFLITRQLFTGAGRMGEQGFQITQRADFLDEAVSSATTRSRPMVNTRDEPHADPDAFRRLHVIIGDSNRSQWATMMKLATTHLVLCVIEQAGREGKDSGFARFSFADASAANHKVSRDLTGVEASFDMADGTVMEGGAVAIQERYLEIVERFVGQHPEVCSSLPRTDVHEVIRRWRRVIEAFRSGVSETFADKVDWLAKRRLFDMLRNRAGGRLSVSKLEQLDMDYHDVANGALYASLCRRGAMRTLVNESQAHEAIDVPPHDTRAALRGRFIQSARSHNAQYSCDWTRLSLTSPNRMDVTLLDPFDAQPSDRFLTILEALQ.

Glu-33 contributes to the Mg(2+) binding site. An ATP-binding site is contributed by Arg-76. Mg(2+) is bound at residue Tyr-78. The active-site Proton acceptor is the Asp-80. Glu-86 contributes to the Mg(2+) binding site. The ATP site is built by Thr-89 and Trp-453.

It belongs to the Pup ligase/Pup deamidase family. Pup-conjugating enzyme subfamily.

It carries out the reaction ATP + [prokaryotic ubiquitin-like protein]-L-glutamate + [protein]-L-lysine = ADP + phosphate + N(6)-([prokaryotic ubiquitin-like protein]-gamma-L-glutamyl)-[protein]-L-lysine.. It participates in protein degradation; proteasomal Pup-dependent pathway. Its pathway is protein modification; protein pupylation. Functionally, catalyzes the covalent attachment of the prokaryotic ubiquitin-like protein modifier Pup to the proteasomal substrate proteins, thereby targeting them for proteasomal degradation. This tagging system is termed pupylation. The ligation reaction involves the side-chain carboxylate of the C-terminal glutamate of Pup and the side-chain amino group of a substrate lysine. The chain is Pup--protein ligase from Bifidobacterium adolescentis (strain ATCC 15703 / DSM 20083 / NCTC 11814 / E194a).